Consider the following 99-residue polypeptide: Aspartyl/glutamyl-tRNA(Asn/Gln) amidotransferase subunit C (99 aa).

The protein belongs to the GatC family. As to quaternary structure, heterotrimer of A, B and C subunits.

The catalysed reaction is L-glutamyl-tRNA(Gln) + L-glutamine + ATP + H2O = L-glutaminyl-tRNA(Gln) + L-glutamate + ADP + phosphate + H(+). It carries out the reaction L-aspartyl-tRNA(Asn) + L-glutamine + ATP + H2O = L-asparaginyl-tRNA(Asn) + L-glutamate + ADP + phosphate + 2 H(+). Allows the formation of correctly charged Asn-tRNA(Asn) or Gln-tRNA(Gln) through the transamidation of misacylated Asp-tRNA(Asn) or Glu-tRNA(Gln) in organisms which lack either or both of asparaginyl-tRNA or glutaminyl-tRNA synthetases. The reaction takes place in the presence of glutamine and ATP through an activated phospho-Asp-tRNA(Asn) or phospho-Glu-tRNA(Gln). This is Aspartyl/glutamyl-tRNA(Asn/Gln) amidotransferase subunit C from Cupriavidus necator (strain ATCC 17699 / DSM 428 / KCTC 22496 / NCIMB 10442 / H16 / Stanier 337) (Ralstonia eutropha).